We begin with the raw amino-acid sequence, 245 residues long: Acetylglutamate kinase (245 aa).

Substrate contacts are provided by residues 41-42 (GG), Arg63, and Asn156.

It belongs to the acetylglutamate kinase family. ArgB subfamily.

It localises to the cytoplasm. The enzyme catalyses N-acetyl-L-glutamate + ATP = N-acetyl-L-glutamyl 5-phosphate + ADP. The protein operates within amino-acid biosynthesis; L-arginine biosynthesis; N(2)-acetyl-L-ornithine from L-glutamate: step 2/4. Its function is as follows. Catalyzes the ATP-dependent phosphorylation of N-acetyl-L-glutamate. The protein is Acetylglutamate kinase of Streptococcus sanguinis (strain SK36).